The chain runs to 428 residues: Adenylosuccinate synthetase (428 aa).

GTP contacts are provided by residues glycine 12–lysine 18 and glycine 40–threonine 42. Residue aspartate 13 is the Proton acceptor of the active site. 2 residues coordinate Mg(2+): aspartate 13 and glycine 40. IMP contacts are provided by residues aspartate 13 to lysine 16, asparagine 38 to histidine 41, threonine 128, arginine 142, glutamine 223, threonine 238, and arginine 302. Residue histidine 41 is the Proton donor of the active site. Threonine 298–arginine 304 serves as a coordination point for substrate. Residues arginine 304, serine 330 to aspartate 332, and serine 412 to glycine 414 each bind GTP.

Belongs to the adenylosuccinate synthetase family. As to quaternary structure, homodimer. The cofactor is Mg(2+).

Its subcellular location is the cytoplasm. The enzyme catalyses IMP + L-aspartate + GTP = N(6)-(1,2-dicarboxyethyl)-AMP + GDP + phosphate + 2 H(+). Its pathway is purine metabolism; AMP biosynthesis via de novo pathway; AMP from IMP: step 1/2. Its function is as follows. Plays an important role in the de novo pathway of purine nucleotide biosynthesis. Catalyzes the first committed step in the biosynthesis of AMP from IMP. The chain is Adenylosuccinate synthetase from Streptococcus pneumoniae serotype 2 (strain D39 / NCTC 7466).